We begin with the raw amino-acid sequence, 211 residues long: Urease accessory protein UreG (211 aa).

13–20 (GPVGSGKT) is a binding site for GTP.

This sequence belongs to the SIMIBI class G3E GTPase family. UreG subfamily. Homodimer. UreD, UreF and UreG form a complex that acts as a GTP-hydrolysis-dependent molecular chaperone, activating the urease apoprotein by helping to assemble the nickel containing metallocenter of UreC. The UreE protein probably delivers the nickel.

The protein localises to the cytoplasm. Its function is as follows. Facilitates the functional incorporation of the urease nickel metallocenter. This process requires GTP hydrolysis, probably effectuated by UreG. The protein is Urease accessory protein UreG of Alkalilimnicola ehrlichii (strain ATCC BAA-1101 / DSM 17681 / MLHE-1).